Consider the following 278-residue polypeptide: NAD kinase (278 aa).

Catalysis depends on D56, which acts as the Proton acceptor. NAD(+) contacts are provided by residues D56–G57, N132–E133, R158, D160, and T171–S176.

Belongs to the NAD kinase family. It depends on a divalent metal cation as a cofactor.

The protein resides in the cytoplasm. It catalyses the reaction NAD(+) + ATP = ADP + NADP(+) + H(+). Involved in the regulation of the intracellular balance of NAD and NADP, and is a key enzyme in the biosynthesis of NADP. Catalyzes specifically the phosphorylation on 2'-hydroxyl of the adenosine moiety of NAD to yield NADP. The sequence is that of NAD kinase from Streptococcus agalactiae serotype III (strain NEM316).